The sequence spans 455 residues: 1-deoxy-D-xylulose 5-phosphate reductoisomerase (455 aa).

NADPH-binding residues include T30, G31, S32, I33, Q63, and N159. K160 is a 1-deoxy-D-xylulose 5-phosphate binding site. An NADPH-binding site is contributed by E161. D185 is a Mn(2+) binding site. S186 and E187 together coordinate 1-deoxy-D-xylulose 5-phosphate. A Mn(2+)-binding site is contributed by E187. Residues Y205–P214 are compositionally biased toward polar residues. A disordered region spans residues Y205–T233. Residues S246 and H269 each coordinate 1-deoxy-D-xylulose 5-phosphate. G275 serves as a coordination point for NADPH. The 1-deoxy-D-xylulose 5-phosphate site is built by S282, N287, K288, and E291. E291 lines the Mn(2+) pocket.

It belongs to the DXR family. Mg(2+) is required as a cofactor. Requires Mn(2+) as cofactor.

It catalyses the reaction 2-C-methyl-D-erythritol 4-phosphate + NADP(+) = 1-deoxy-D-xylulose 5-phosphate + NADPH + H(+). It participates in isoprenoid biosynthesis; isopentenyl diphosphate biosynthesis via DXP pathway; isopentenyl diphosphate from 1-deoxy-D-xylulose 5-phosphate: step 1/6. Functionally, catalyzes the NADPH-dependent rearrangement and reduction of 1-deoxy-D-xylulose-5-phosphate (DXP) to 2-C-methyl-D-erythritol 4-phosphate (MEP). This is 1-deoxy-D-xylulose 5-phosphate reductoisomerase from Rhodopirellula baltica (strain DSM 10527 / NCIMB 13988 / SH1).